Here is a 1122-residue protein sequence, read N- to C-terminus: Histidine kinase CKI1 (1122 aa).

Residues 1–12 lie on the Cytoplasmic side of the membrane; the sequence is MMVKVTKLVASR. The helical transmembrane segment at 13–33 threads the bilayer; the sequence is PIVVFCVLAFLVVVFECIWIS. Topologically, residues 34 to 345 are extracellular; that stretch reads NWRTTTENLV…KHQAEKAKYQ (312 aa). The chain crosses the membrane as a helical span at residues 346-366; that stretch reads LIVVMIFLGFGWPVWFVWFMM. The Cytoplasmic segment spans residues 367-1122; that stretch reads QATRREMHMR…VIREIESKRH (756 aa). Positions 402-671 constitute a Histidine kinase domain; that stretch reads NASHDIRGAL…CFQFNVLLTT (270 aa). Position 405 is a phosphohistidine; by autocatalysis (H405). Residues 918–928 show a composition bias toward basic and acidic residues; it reads AERSPKHKVQE. The disordered stretch occupies residues 918 to 981; sequence AERSPKHKVQ…QETSKPSDDE (64 aa). The Response regulatory domain maps to 987-1120; sequence RVLVVDDNFI…ANVIREIESK (134 aa). D1050 is modified (4-aspartylphosphate).

As to quaternary structure, homodimer. Interacts with AHP2 and AHP3. As to expression, expressed in vascular tissues of inflorescence stems and floral organs, especially in procambium cells, and in siliques.

It localises to the cell membrane. It carries out the reaction ATP + protein L-histidine = ADP + protein N-phospho-L-histidine.. Functionally, essential protein. Functions as a histidine kinase and transmits the stress signal to a downstream MAPK cascade. This protein undergoes an ATP-dependent autophosphorylation at a conserved histidine residue in the kinase core, and a phosphoryl group is then transferred to a conserved aspartate residue in the receiver domain. Required for the development of megagametophyte in female gametophyte (embryo sac) independently of cytokinin. Contributes to vascular bundle formation and secondary growth in a cytokinin-independent manner, probably by promoting the maintenance of mitotic activity and/or identity of procambial cells. Seems to influence and promote the cytokinin signaling pathway. The polypeptide is Histidine kinase CKI1 (CKI1) (Arabidopsis thaliana (Mouse-ear cress)).